The chain runs to 107 residues: Thioredoxin-1 (107 aa).

A Thioredoxin domain is found at A2–K106. Catalysis depends on nucleophile residues C31 and C34. The cysteines at positions 31 and 34 are disulfide-linked.

Belongs to the thioredoxin family.

It localises to the nucleus. In terms of biological role, participates in various redox reactions through the reversible oxidation of its active center dithiol to a disulfide and catalyzes dithiol-disulfide exchange reactions. As a reducing substrate of peroxiredoxin 1, thioredoxin 2 is preferred over thioredoxin 1. Required for female meiosis and early embryonic development. The sequence is that of Thioredoxin-1 (dhd) from Drosophila yakuba (Fruit fly).